Consider the following 160-residue polypeptide: SsrA-binding protein (160 aa).

This sequence belongs to the SmpB family.

The protein resides in the cytoplasm. Functionally, required for rescue of stalled ribosomes mediated by trans-translation. Binds to transfer-messenger RNA (tmRNA), required for stable association of tmRNA with ribosomes. tmRNA and SmpB together mimic tRNA shape, replacing the anticodon stem-loop with SmpB. tmRNA is encoded by the ssrA gene; the 2 termini fold to resemble tRNA(Ala) and it encodes a 'tag peptide', a short internal open reading frame. During trans-translation Ala-aminoacylated tmRNA acts like a tRNA, entering the A-site of stalled ribosomes, displacing the stalled mRNA. The ribosome then switches to translate the ORF on the tmRNA; the nascent peptide is terminated with the 'tag peptide' encoded by the tmRNA and targeted for degradation. The ribosome is freed to recommence translation, which seems to be the essential function of trans-translation. In Mycobacterium bovis (strain ATCC BAA-935 / AF2122/97), this protein is SsrA-binding protein.